Reading from the N-terminus, the 133-residue chain is Large ribosomal subunit protein uL14m (133 aa).

It belongs to the universal ribosomal protein uL14 family. Probably part of the large ribosomal subunit.

Its subcellular location is the hydrogenosome. The protein is Large ribosomal subunit protein uL14m (rpl14) of Nyctotherus ovalis.